Reading from the N-terminus, the 728-residue chain is Catalase-peroxidase 1 (728 aa).

Residues 1–22 (MDKTQSSQGKCPVMHGANSAVA) form the signal peptide. The segment at residues 97 to 225 (WHSAGTYRVA…LAAVMMGLIY (129 aa)) is a cross-link (tryptophyl-tyrosyl-methioninium (Trp-Tyr) (with M-251)). The Proton acceptor role is filled by histidine 98. The tryptophyl-tyrosyl-methioninium (Tyr-Met) (with W-97) cross-link spans 225–251 (YVNPEGVDGKPDPLRTAQDVRVTFARM). Histidine 266 contributes to the heme b binding site.

The protein belongs to the peroxidase family. Peroxidase/catalase subfamily. As to quaternary structure, homodimer or homotetramer. Heme b serves as cofactor. Post-translationally, formation of the three residue Trp-Tyr-Met cross-link is important for the catalase, but not the peroxidase activity of the enzyme.

The catalysed reaction is H2O2 + AH2 = A + 2 H2O. It carries out the reaction 2 H2O2 = O2 + 2 H2O. In terms of biological role, bifunctional enzyme with both catalase and broad-spectrum peroxidase activity. This Shewanella sp. (strain MR-7) protein is Catalase-peroxidase 1.